A 606-amino-acid polypeptide reads, in one-letter code: Maternal effect protein oskar (606 aa).

The HTH OST-type domain maps to 152 to 221 (EYPDIDSEVR…SGKRIFNLKA (70 aa)). Ser270 and Ser275 each carry phosphoserine. The tract at residues 425 to 439 (LMGDDFMLYLARMEL) is leucine-zipper.

As to quaternary structure, interacts with smaug (smg). In terms of assembly, interacts with yl/yolkless. As to expression, begins to accumulate at the posterior pole of the oocyte from stage 8 onwards.

It localises to the endosome. Functionally, organizes the germ plasm and directs localization of the posterior determinant nanos. Oskar protein is required to keep nanos (nos) RNA and staufen protein at the posterior pole. This Drosophila melanogaster (Fruit fly) protein is Maternal effect protein oskar (osk).